We begin with the raw amino-acid sequence, 215 residues long: ATP-dependent dethiobiotin synthetase BioD (215 aa).

Residue 13–18 (DIGKTV) participates in ATP binding. Thr17 contacts Mg(2+). The active site involves Lys38. Thr42 provides a ligand contact to substrate. ATP contacts are provided by residues Asp50, 115–118 (EGAG), and 175–176 (NH). Mg(2+) is bound by residues Asp50 and Glu115.

This sequence belongs to the dethiobiotin synthetase family. As to quaternary structure, homodimer. The cofactor is Mg(2+).

Its subcellular location is the cytoplasm. The catalysed reaction is (7R,8S)-7,8-diammoniononanoate + CO2 + ATP = (4R,5S)-dethiobiotin + ADP + phosphate + 3 H(+). The protein operates within cofactor biosynthesis; biotin biosynthesis; biotin from 7,8-diaminononanoate: step 1/2. Functionally, catalyzes a mechanistically unusual reaction, the ATP-dependent insertion of CO2 between the N7 and N8 nitrogen atoms of 7,8-diaminopelargonic acid (DAPA, also called 7,8-diammoniononanoate) to form a ureido ring. This chain is ATP-dependent dethiobiotin synthetase BioD, found in Neisseria meningitidis serogroup B (strain ATCC BAA-335 / MC58).